A 732-amino-acid chain; its full sequence is 1,4-alpha-glucan branching enzyme GlgB (732 aa).

Asp-415 serves as the catalytic Nucleophile. Glu-468 acts as the Proton donor in catalysis.

Belongs to the glycosyl hydrolase 13 family. GlgB subfamily. Monomer.

The catalysed reaction is Transfers a segment of a (1-&gt;4)-alpha-D-glucan chain to a primary hydroxy group in a similar glucan chain.. Its pathway is glycan biosynthesis; glycogen biosynthesis. Catalyzes the formation of the alpha-1,6-glucosidic linkages in glycogen by scission of a 1,4-alpha-linked oligosaccharide from growing alpha-1,4-glucan chains and the subsequent attachment of the oligosaccharide to the alpha-1,6 position. The protein is 1,4-alpha-glucan branching enzyme GlgB of Nitrosomonas eutropha (strain DSM 101675 / C91 / Nm57).